The primary structure comprises 583 residues: Isocitrate dehydrogenase kinase/phosphatase (583 aa).

Residues alanine 315–methionine 321 and lysine 336 each bind ATP. Aspartate 371 is an active-site residue.

Belongs to the AceK family.

The protein localises to the cytoplasm. The enzyme catalyses L-seryl-[isocitrate dehydrogenase] + ATP = O-phospho-L-seryl-[isocitrate dehydrogenase] + ADP + H(+). Bifunctional enzyme which can phosphorylate or dephosphorylate isocitrate dehydrogenase (IDH) on a specific serine residue. This is a regulatory mechanism which enables bacteria to bypass the Krebs cycle via the glyoxylate shunt in response to the source of carbon. When bacteria are grown on glucose, IDH is fully active and unphosphorylated, but when grown on acetate or ethanol, the activity of IDH declines drastically concomitant with its phosphorylation. The polypeptide is Isocitrate dehydrogenase kinase/phosphatase (Salmonella agona (strain SL483)).